The following is a 504-amino-acid chain: Cytochrome P450 4A24 (504 aa).

The next 2 helical transmembrane spans lie at 6-26 and 112-132; these read LASASGLLQVASLLGLLLLLL and VVYRLLIPWIGCGLLLLNGQT. C451 contributes to the heme binding site.

Belongs to the cytochrome P450 family. Heme serves as cofactor.

It localises to the endoplasmic reticulum membrane. It catalyses the reaction an omega-methyl-long-chain fatty acid + reduced [NADPH--hemoprotein reductase] + O2 = an omega-hydroxy-long-chain fatty acid + oxidized [NADPH--hemoprotein reductase] + H2O + H(+). Its function is as follows. Catalyzes the omega- and (omega-1)-hydroxylation of various fatty acids such as laurate and palmitate. Has no activity toward taurochenodeoxycholic acid. This chain is Cytochrome P450 4A24 (CYP4A24), found in Sus scrofa (Pig).